Reading from the N-terminus, the 132-residue chain is METDTLLLWVLLLWVPGSTGDIVLTQSPASLAVSLGQRATISCRASKSVNTYGNSFMZWYZZKPGZPPKLLIYRASNLZSGIPARFSGSGSRTBFTLTIBPVZABDVATYFCZZSBZBPWTFGSGTKLEIKR.

Residues 1-20 form the signal peptide; that stretch reads METDTLLLWVLLLWVPGSTG. Positions 21 to 43 are framework-1; it reads DIVLTQSPASLAVSLGQRATISC. Cysteine 43 and cysteine 112 are disulfide-bonded. The segment at 44–58 is complementarity-determining-1; it reads RASKSVNTYGNSFMZ. Residues 59 to 73 are framework-2; it reads WYZZKPGZPPKLLIY. The interval 74-80 is complementarity-determining-2; it reads RASNLZS. Residues 81–112 are framework-3; that stretch reads GIPARFSGSGSRTBFTLTIBPVZABDVATYFC. Residues 113–121 form a complementarity-determining-3 region; it reads ZZSBZBPWT. The framework-4 stretch occupies residues 122–131; that stretch reads FGSGTKLEIK.

This chain is Ig kappa chain V-III region MOPC 321, found in Mus musculus (Mouse).